Reading from the N-terminus, the 215-residue chain is Keratin-associated protein 26-1 (215 aa).

Belongs to the PMG family. As to quaternary structure, interacts with hair keratins.

In terms of biological role, in the hair cortex, hair keratin intermediate filaments are embedded in an interfilamentous matrix, consisting of hair keratin-associated proteins (KRTAP), which are essential for the formation of a rigid and resistant hair shaft through their extensive disulfide bond cross-linking with abundant cysteine residues of hair keratins. The matrix proteins include the high-sulfur and high-glycine-tyrosine keratins. In Mus musculus (Mouse), this protein is Keratin-associated protein 26-1.